The chain runs to 178 residues: Translation initiation factor IF-3 (178 aa).

It belongs to the IF-3 family. As to quaternary structure, monomer.

It is found in the cytoplasm. Its function is as follows. IF-3 binds to the 30S ribosomal subunit and shifts the equilibrium between 70S ribosomes and their 50S and 30S subunits in favor of the free subunits, thus enhancing the availability of 30S subunits on which protein synthesis initiation begins. This Macrococcus caseolyticus (strain JCSC5402) (Macrococcoides caseolyticum) protein is Translation initiation factor IF-3.